We begin with the raw amino-acid sequence, 289 residues long: tRNA dimethylallyltransferase (289 aa).

9 to 16 (GTTASGKT) serves as a coordination point for ATP. 11-16 (TASGKT) is a substrate binding site. The segment at 34 to 37 (DSLC) is interaction with substrate tRNA.

The protein belongs to the IPP transferase family. Monomer. Mg(2+) is required as a cofactor.

The enzyme catalyses adenosine(37) in tRNA + dimethylallyl diphosphate = N(6)-dimethylallyladenosine(37) in tRNA + diphosphate. In terms of biological role, catalyzes the transfer of a dimethylallyl group onto the adenine at position 37 in tRNAs that read codons beginning with uridine, leading to the formation of N6-(dimethylallyl)adenosine (i(6)A). The chain is tRNA dimethylallyltransferase from Campylobacter jejuni subsp. jejuni serotype O:23/36 (strain 81-176).